A 72-amino-acid chain; its full sequence is Translation initiation factor IF-1 (72 aa).

The region spanning 1 to 72 is the S1-like domain; the sequence is MSKSDYIELE…TKGRIIFRHK (72 aa).

It belongs to the IF-1 family. In terms of assembly, component of the 30S ribosomal translation pre-initiation complex which assembles on the 30S ribosome in the order IF-2 and IF-3, IF-1 and N-formylmethionyl-tRNA(fMet); mRNA recruitment can occur at any time during PIC assembly.

Its subcellular location is the cytoplasm. Its function is as follows. One of the essential components for the initiation of protein synthesis. Stabilizes the binding of IF-2 and IF-3 on the 30S subunit to which N-formylmethionyl-tRNA(fMet) subsequently binds. Helps modulate mRNA selection, yielding the 30S pre-initiation complex (PIC). Upon addition of the 50S ribosomal subunit IF-1, IF-2 and IF-3 are released leaving the mature 70S translation initiation complex. The protein is Translation initiation factor IF-1 of Ruthia magnifica subsp. Calyptogena magnifica.